Consider the following 230-residue polypeptide: Ureidoacrylate amidohydrolase RutB (230 aa).

The active-site Proton acceptor is aspartate 24. Lysine 133 is an active-site residue. The active-site Nucleophile is cysteine 166.

This sequence belongs to the isochorismatase family. RutB subfamily.

The catalysed reaction is (Z)-3-ureidoacrylate + H2O + H(+) = (Z)-3-aminoacrylate + NH4(+) + CO2. The enzyme catalyses (Z)-3-ureidoacrylate + H2O = (Z)-3-aminoacrylate + carbamate + H(+). It catalyses the reaction (Z)-2-methylureidoacrylate + H2O + H(+) = (Z)-2-methylaminoacrylate + NH4(+) + CO2. Its function is as follows. Hydrolyzes ureidoacrylate to form aminoacrylate and carbamate. The carbamate hydrolyzes spontaneously, thereby releasing one of the nitrogen atoms of the pyrimidine ring as ammonia and one of its carbon atoms as CO2. The polypeptide is Ureidoacrylate amidohydrolase RutB (Escherichia coli O150:H5 (strain SE15)).